Consider the following 316-residue polypeptide: Retinol dehydrogenase 12 (316 aa).

NADP(+) is bound at residue 46–52; that stretch reads GANTGIG. Ser-175 is a substrate binding site. Tyr-200 acts as the Proton acceptor in catalysis.

It belongs to the short-chain dehydrogenases/reductases (SDR) family. As to expression, widely expressed, mostly in retina, kidney, brain, skeletal muscle, pancreas and stomach.

It is found in the endoplasmic reticulum membrane. It carries out the reaction all-trans-retinol + NADP(+) = all-trans-retinal + NADPH + H(+). The enzyme catalyses 11-cis-retinol + NADP(+) = 11-cis-retinal + NADPH + H(+). The catalysed reaction is 9-cis-retinol + NADP(+) = 9-cis-retinal + NADPH + H(+). It catalyses the reaction a 4-hydroxynonen-1-ol + NADP(+) = a 4-hydroxynonenal + NADPH + H(+). It carries out the reaction (E)-non-2-en-1-ol + NADP(+) = (E)-non-2-enal + NADPH + H(+). The enzyme catalyses (Z)-non-6-en-1-ol + NADP(+) = (Z)-non-6-enal + NADPH + H(+). The catalysed reaction is nonan-1-ol + NADP(+) = nonanal + NADPH + H(+). It functions in the pathway cofactor metabolism; retinol metabolism. Retinoids dehydrogenase/reductase with a clear preference for NADP. Displays high activity towards 9-cis, 11-cis and all-trans-retinal. Shows very weak activity towards 13-cis-retinol. Also exhibits activity, albeit with lower affinity than for retinaldehydes, towards lipid peroxidation products (C9 aldehydes) such as 4-hydroxynonenal and trans-2-nonenal. May play an important function in photoreceptor cells to detoxify 4-hydroxynonenal and potentially other toxic aldehyde products resulting from lipid peroxidation. Has no dehydrogenase activity towards steroids. The protein is Retinol dehydrogenase 12 (RDH12) of Homo sapiens (Human).